Consider the following 126-residue polypeptide: 3-aminoacrylate deaminase RutC (126 aa).

This sequence belongs to the RutC family.

It catalyses the reaction (Z)-3-aminoacrylate + H2O + H(+) = 3-oxopropanoate + NH4(+). In terms of biological role, involved in pyrimidine catabolism. Catalyzes the deamination of 3-aminoacrylate to malonic semialdehyde, a reaction that can also occur spontaneously. RutC may facilitate the reaction and modulate the metabolic fitness, rather than catalyzing essential functions. The protein is 3-aminoacrylate deaminase RutC of Acinetobacter baylyi (strain ATCC 33305 / BD413 / ADP1).